Consider the following 525-residue polypeptide: Chromosomal replication initiator protein DnaA (525 aa).

The domain I, interacts with DnaA modulators stretch occupies residues 1–71 (MNDFWQHCSA…ADLAREFWNT (71 aa)). Positions 71-188 (TPIEVQFVLD…GEADSMYERS (118 aa)) are domain II. The disordered stretch occupies residues 160 to 182 (AAAGRRTWRPGPGAAPANGGEAD). A compositionally biased stretch (low complexity) spans 169–181 (PGPGAAPANGGEA). A domain III, AAA+ region region spans residues 189–405 (KLNPVLTFDN…GALRKILAYS (217 aa)). ATP contacts are provided by Gly233, Gly235, Lys236, and Thr237. Residues 406–525 (KFHGREISIE…LHVLEQTLKG (120 aa)) are domain IV, binds dsDNA.

It belongs to the DnaA family. Oligomerizes as a right-handed, spiral filament on DNA at oriC.

It localises to the cytoplasm. Functionally, plays an essential role in the initiation and regulation of chromosomal replication. ATP-DnaA binds to the origin of replication (oriC) to initiate formation of the DNA replication initiation complex once per cell cycle. Binds the DnaA box (a 9 base pair repeat at the origin) and separates the double-stranded (ds)DNA. Forms a right-handed helical filament on oriC DNA; dsDNA binds to the exterior of the filament while single-stranded (ss)DNA is stabiized in the filament's interior. The ATP-DnaA-oriC complex binds and stabilizes one strand of the AT-rich DNA unwinding element (DUE), permitting loading of DNA polymerase. After initiation quickly degrades to an ADP-DnaA complex that is not apt for DNA replication. Binds acidic phospholipids. The polypeptide is Chromosomal replication initiator protein DnaA (Burkholderia cenocepacia (strain ATCC BAA-245 / DSM 16553 / LMG 16656 / NCTC 13227 / J2315 / CF5610) (Burkholderia cepacia (strain J2315))).